Here is a 151-residue protein sequence, read N- to C-terminus: Large ribosomal subunit protein uL22 (151 aa).

The protein belongs to the universal ribosomal protein uL22 family. In terms of assembly, part of the 50S ribosomal subunit.

Functionally, this protein binds specifically to 23S rRNA. It makes multiple contacts with different domains of the 23S rRNA in the assembled 50S subunit and ribosome. In terms of biological role, the globular domain of the protein is located near the polypeptide exit tunnel on the outside of the subunit, while an extended beta-hairpin is found that lines the wall of the exit tunnel in the center of the 70S ribosome. The polypeptide is Large ribosomal subunit protein uL22 (Methanococcoides burtonii (strain DSM 6242 / NBRC 107633 / OCM 468 / ACE-M)).